A 311-amino-acid chain; its full sequence is Ornithine carbamoyltransferase (311 aa).

Carbamoyl phosphate is bound by residues 54–57 (STRT), Gln81, Arg105, and 132–135 (HPCQ). L-ornithine-binding positions include Asn164, Asp228, and 232 to 233 (SM). Carbamoyl phosphate contacts are provided by residues 268–269 (CL) and Arg296.

The protein belongs to the aspartate/ornithine carbamoyltransferase superfamily. OTCase family.

It localises to the cytoplasm. It carries out the reaction carbamoyl phosphate + L-ornithine = L-citrulline + phosphate + H(+). Its pathway is amino-acid biosynthesis; L-arginine biosynthesis; L-arginine from L-ornithine and carbamoyl phosphate: step 1/3. In terms of biological role, reversibly catalyzes the transfer of the carbamoyl group from carbamoyl phosphate (CP) to the N(epsilon) atom of ornithine (ORN) to produce L-citrulline. The chain is Ornithine carbamoyltransferase from Renibacterium salmoninarum (strain ATCC 33209 / DSM 20767 / JCM 11484 / NBRC 15589 / NCIMB 2235).